Here is a 374-residue protein sequence, read N- to C-terminus: Low-specificity L-threonine aldolase (374 aa).

K213 carries the N6-(pyridoxal phosphate)lysine modification. Residues 354-374 (HPHKDDGRNNKKMYSLDAIKK) are disordered.

Belongs to the threonine aldolase family. In terms of assembly, homotetramer. The cofactor is pyridoxal 5'-phosphate.

It catalyses the reaction L-threonine = acetaldehyde + glycine. The enzyme catalyses L-allo-threonine = acetaldehyde + glycine. It participates in amino-acid degradation; L-threonine degradation via aldolase pathway; acetaldehyde and glycine from L-threonine: step 1/1. This chain is Low-specificity L-threonine aldolase (GLY1), found in Candida albicans (Yeast).